We begin with the raw amino-acid sequence, 500 residues long: Na(+)/H(+) antiporter NhaB (500 aa).

The next 13 helical transmembrane spans lie at 11–31 (HGFLGQSPLWYKAVICLFLVL), 34–54 (LLLATIGPAAAGWALVIEFIF), 58–78 (MALKCYPLMPGGLLLIEALLL), 96–116 (VILLLMFMVAGIHFMKELLLF), 121–141 (ILLGVRSKAMLSLLFCVLSAF), 145–165 (FLDALTVTAVIISAAVGFYAV), 205–225 (LLMHGAVGTALGGVCTLVGEP), 241–261 (FLLKVAPVSIPVLGAGLLTCV), 311–331 (ILIICLGLHVAEVGLIGLMVI), 350–370 (FQDAMPFTSLLVVFFAVVAVI), 394–414 (MLYLANGLLSAISDNVFVATI), 450–470 (ATPNGQAAFLFLLTSAIAPLI), and 477–497 (MVWMALPYTVVMGGLGWWAVT).

This sequence belongs to the NhaB Na(+)/H(+) (TC 2.A.34) antiporter family.

It is found in the cell inner membrane. It catalyses the reaction 2 Na(+)(in) + 3 H(+)(out) = 2 Na(+)(out) + 3 H(+)(in). Its function is as follows. Na(+)/H(+) antiporter that extrudes sodium in exchange for external protons. In Pseudomonas putida (strain ATCC 700007 / DSM 6899 / JCM 31910 / BCRC 17059 / LMG 24140 / F1), this protein is Na(+)/H(+) antiporter NhaB.